Here is a 209-residue protein sequence, read N- to C-terminus: Transcription antitermination protein NusB (209 aa).

The protein belongs to the NusB family.

Involved in transcription antitermination. Required for transcription of ribosomal RNA (rRNA) genes. Binds specifically to the boxA antiterminator sequence of the ribosomal RNA (rrn) operons. The polypeptide is Transcription antitermination protein NusB (Cyanothece sp. (strain PCC 7425 / ATCC 29141)).